The sequence spans 132 residues: Large-conductance mechanosensitive channel (132 aa).

Transmembrane regions (helical) follow at residues 10-30 (FAVK…SAFG) and 76-96 (GNFI…FLAI).

It belongs to the MscL family. In terms of assembly, homopentamer.

The protein resides in the cell inner membrane. Channel that opens in response to stretch forces in the membrane lipid bilayer. May participate in the regulation of osmotic pressure changes within the cell. In Campylobacter hominis (strain ATCC BAA-381 / DSM 21671 / CCUG 45161 / LMG 19568 / NCTC 13146 / CH001A), this protein is Large-conductance mechanosensitive channel.